Here is a 413-residue protein sequence, read N- to C-terminus: Aspartate aminotransferase, cytoplasmic (413 aa).

L-aspartate-binding residues include G39 and W141. A Phosphoserine modification is found at S149. N195 provides a ligand contact to L-aspartate. Residue K259 is modified to N6-(pyridoxal phosphate)lysine. R387 contacts L-aspartate.

The protein belongs to the class-I pyridoxal-phosphate-dependent aminotransferase family. As to quaternary structure, homodimer. Pyridoxal 5'-phosphate is required as a cofactor.

The protein resides in the cytoplasm. The enzyme catalyses L-aspartate + 2-oxoglutarate = oxaloacetate + L-glutamate. It catalyses the reaction L-cysteine + 2-oxoglutarate = 2-oxo-3-sulfanylpropanoate + L-glutamate. The catalysed reaction is (2S)-2-aminobutanoate + 2-oxoglutarate = 2-oxobutanoate + L-glutamate. It carries out the reaction 3-sulfino-L-alanine + 2-oxoglutarate = 3-sulfinopyruvate + L-glutamate. In terms of biological role, biosynthesis of L-glutamate from L-aspartate or L-cysteine. Important regulator of levels of glutamate, the major excitatory neurotransmitter of the vertebrate central nervous system. Acts as a scavenger of glutamate in brain neuroprotection. The aspartate aminotransferase activity is involved in hepatic glucose synthesis during development and in adipocyte glyceroneogenesis. Using L-cysteine as substrate, regulates levels of mercaptopyruvate, an important source of hydrogen sulfide. Mercaptopyruvate is converted into H(2)S via the action of 3-mercaptopyruvate sulfurtransferase (3MST). Hydrogen sulfide is an important synaptic modulator and neuroprotectant in the brain. In Macaca fascicularis (Crab-eating macaque), this protein is Aspartate aminotransferase, cytoplasmic.